Consider the following 134-residue polypeptide: 6,7-dimethyl-8-ribityllumazine synthase (134 aa).

5-amino-6-(D-ribitylamino)uracil-binding positions include F12, 44–46 (VFD), and 68–70 (SVI). 73-74 (ET) lines the (2S)-2-hydroxy-3-oxobutyl phosphate pocket. The active-site Proton donor is H76. Position 101 (L101) interacts with 5-amino-6-(D-ribitylamino)uracil. Position 116 (R116) interacts with (2S)-2-hydroxy-3-oxobutyl phosphate.

It belongs to the DMRL synthase family.

The enzyme catalyses (2S)-2-hydroxy-3-oxobutyl phosphate + 5-amino-6-(D-ribitylamino)uracil = 6,7-dimethyl-8-(1-D-ribityl)lumazine + phosphate + 2 H2O + H(+). The protein operates within cofactor biosynthesis; riboflavin biosynthesis; riboflavin from 2-hydroxy-3-oxobutyl phosphate and 5-amino-6-(D-ribitylamino)uracil: step 1/2. Catalyzes the formation of 6,7-dimethyl-8-ribityllumazine by condensation of 5-amino-6-(D-ribitylamino)uracil with 3,4-dihydroxy-2-butanone 4-phosphate. This is the penultimate step in the biosynthesis of riboflavin. The chain is 6,7-dimethyl-8-ribityllumazine synthase from Methanosarcina mazei (strain ATCC BAA-159 / DSM 3647 / Goe1 / Go1 / JCM 11833 / OCM 88) (Methanosarcina frisia).